The following is a 184-amino-acid chain: 3-hydroxyanthranilate 3,4-dioxygenase (184 aa).

Residue Arg44 participates in O2 binding. Fe cation-binding residues include His48, Glu54, and His92. Residue Glu54 participates in substrate binding. Substrate contacts are provided by Arg96 and Glu106. A divalent metal cation-binding residues include Cys121, Cys126, Cys162, and Cys165.

The protein belongs to the 3-HAO family. Fe(2+) is required as a cofactor.

The protein resides in the cytoplasm. The catalysed reaction is 3-hydroxyanthranilate + O2 = (2Z,4Z)-2-amino-3-carboxymuconate 6-semialdehyde. It participates in cofactor biosynthesis; NAD(+) biosynthesis; quinolinate from L-kynurenine: step 3/3. Its function is as follows. Catalyzes the oxidative ring opening of 3-hydroxyanthranilate to 2-amino-3-carboxymuconate semialdehyde, which spontaneously cyclizes to quinolinate. This is 3-hydroxyanthranilate 3,4-dioxygenase from Pyricularia oryzae (strain 70-15 / ATCC MYA-4617 / FGSC 8958) (Rice blast fungus).